Reading from the N-terminus, the 513-residue chain is Histidine ammonia-lyase (513 aa).

Positions 146 to 148 form a cross-link, 5-imidazolinone (Ala-Gly); that stretch reads ASG. A 2,3-didehydroalanine (Ser) modification is found at serine 147.

It belongs to the PAL/histidase family. In terms of processing, contains an active site 4-methylidene-imidazol-5-one (MIO), which is formed autocatalytically by cyclization and dehydration of residues Ala-Ser-Gly.

The protein localises to the cytoplasm. The catalysed reaction is L-histidine = trans-urocanate + NH4(+). The protein operates within amino-acid degradation; L-histidine degradation into L-glutamate; N-formimidoyl-L-glutamate from L-histidine: step 1/3. This is Histidine ammonia-lyase from Shewanella oneidensis (strain ATCC 700550 / JCM 31522 / CIP 106686 / LMG 19005 / NCIMB 14063 / MR-1).